The following is a 252-amino-acid chain: 5-oxoprolinase subunit A (252 aa).

This sequence belongs to the LamB/PxpA family. Forms a complex composed of PxpA, PxpB and PxpC.

It catalyses the reaction 5-oxo-L-proline + ATP + 2 H2O = L-glutamate + ADP + phosphate + H(+). Catalyzes the cleavage of 5-oxoproline to form L-glutamate coupled to the hydrolysis of ATP to ADP and inorganic phosphate. The polypeptide is 5-oxoprolinase subunit A (Mycobacterium marinum (strain ATCC BAA-535 / M)).